The sequence spans 572 residues: Urease subunit alpha (572 aa).

Ni(2+) is bound by residues histidine 139, histidine 141, and lysine 222. Residue lysine 222 is modified to N6-carboxylysine. Histidine 224 contacts substrate. Ni(2+) is bound by residues histidine 251 and histidine 277. Histidine 325 acts as the Proton donor in catalysis. Position 365 (aspartate 365) interacts with Ni(2+).

The protein belongs to the metallo-dependent hydrolases superfamily. Urease alpha subunit family. In terms of assembly, heterotrimer of UreA (gamma), UreB (beta) and UreC (alpha) subunits. Three heterotrimers associate to form the active enzyme. It depends on Ni cation as a cofactor. Carboxylation allows a single lysine to coordinate two nickel ions.

It localises to the cytoplasm. It carries out the reaction urea + 2 H2O + H(+) = hydrogencarbonate + 2 NH4(+). Its pathway is nitrogen metabolism; urea degradation; CO(2) and NH(3) from urea (urease route): step 1/1. This is Urease subunit alpha from Acetivibrio thermocellus (strain ATCC 27405 / DSM 1237 / JCM 9322 / NBRC 103400 / NCIMB 10682 / NRRL B-4536 / VPI 7372) (Clostridium thermocellum).